The sequence spans 407 residues: Argininosuccinate synthase (407 aa).

10-18 (AYSGGLDTS) contacts ATP. Positions 88 and 93 each coordinate L-citrulline. Residue glycine 118 participates in ATP binding. L-aspartate-binding residues include threonine 120, asparagine 124, and aspartate 125. Asparagine 124 provides a ligand contact to L-citrulline. L-citrulline-binding residues include arginine 128, serine 177, serine 186, glutamate 263, and tyrosine 275.

It belongs to the argininosuccinate synthase family. Type 1 subfamily. As to quaternary structure, homotetramer.

Its subcellular location is the cytoplasm. The catalysed reaction is L-citrulline + L-aspartate + ATP = 2-(N(omega)-L-arginino)succinate + AMP + diphosphate + H(+). It participates in amino-acid biosynthesis; L-arginine biosynthesis; L-arginine from L-ornithine and carbamoyl phosphate: step 2/3. The chain is Argininosuccinate synthase from Clostridium botulinum (strain Eklund 17B / Type B).